The primary structure comprises 92 residues: MTEAAKTETSLRRTLVGRVVSDKMDKTVTVLVENRVKHPLYGKYVLRSKKYHAHDEANQYKEGDKVEIQEGRPLSRTKSWVVSRLVEAARVI.

It belongs to the universal ribosomal protein uS17 family. In terms of assembly, part of the 30S ribosomal subunit.

In terms of biological role, one of the primary rRNA binding proteins, it binds specifically to the 5'-end of 16S ribosomal RNA. The sequence is that of Small ribosomal subunit protein uS17 from Cupriavidus pinatubonensis (strain JMP 134 / LMG 1197) (Cupriavidus necator (strain JMP 134)).